The chain runs to 500 residues: 5-taurinomethyluridine-[tRNA] synthase subunit GTPB3, mitochondrial (500 aa).

Residues 1-73 (MHFISCCLRR…RRLTRSLPAP (73 aa)) constitute a mitochondrion transit peptide. The 5,10-methylenetetrahydrofolate site is built by arginine 53, glutamate 111, and lysine 151. In terms of domain architecture, TrmE-type G spans 248-422 (GVHVVIAGST…LLTLLHNTLK (175 aa)). GTP-binding positions include 255-262 (GSTNAGKS), 281-285 (GTTRD), 302-305 (DTAG), and 373-376 (NESD). Asparagine 258 serves as a coordination point for K(+). Positions 262 and 283 each coordinate Mg(2+). A 5,10-methylenetetrahydrofolate-binding site is contributed by lysine 500.

The protein belongs to the TRAFAC class TrmE-Era-EngA-EngB-Septin-like GTPase superfamily. TrmE GTPase family. K(+) serves as cofactor.

It localises to the mitochondrion. The catalysed reaction is GTP + H2O = GDP + phosphate + H(+). Its function is as follows. GTPase component of the GTPBP3-MTO1 complex that catalyzes the 5-taurinomethyluridine (taum(5)U) modification at the 34th wobble position (U34) of mitochondrial tRNAs (mt-tRNAs), which plays a role in mt-tRNA decoding and mitochondrial translation. Taum(5)U formation on mammalian mt-tRNA requires the presence of both GTPBP3-mediated GTPase activity and MTO1 catalytic activity. In Danio rerio (Zebrafish), this protein is 5-taurinomethyluridine-[tRNA] synthase subunit GTPB3, mitochondrial (gtpbp3).